Here is a 284-residue protein sequence, read N- to C-terminus: Tropomyosin (284 aa).

Positions 1 to 284 (MDSIKKKMMA…DTTFAELTSF (284 aa)) form a coiled coil. A disordered region spans residues 97 to 140 (EDFEQSSGRLTETSTKLDDASKAAEESERNRKTLETRSISDDER). Residues 101–110 (QSSGRLTETS) show a composition bias toward polar residues. A compositionally biased stretch (basic and acidic residues) spans 111 to 140 (TKLDDASKAAEESERNRKTLETRSISDDER).

This sequence belongs to the tropomyosin family. Homodimer.

Its function is as follows. Tropomyosin, in association with the troponin complex, plays a central role in the calcium dependent regulation of muscle contraction. The chain is Tropomyosin from Echinococcus multilocularis (Fox tapeworm).